The primary structure comprises 164 residues: Coenzyme Q-binding protein coq10, mitochondrial (164 aa).

Belongs to the COQ10 family. Interacts with coenzyme Q.

It localises to the mitochondrion inner membrane. Its function is as follows. Required for the function of coenzyme Q in the respiratory chain. May serve as a chaperone or may be involved in the transport of Q6 from its site of synthesis to the catalytic sites of the respiratory complexes. The sequence is that of Coenzyme Q-binding protein coq10, mitochondrial from Schizosaccharomyces pombe (strain 972 / ATCC 24843) (Fission yeast).